The sequence spans 429 residues: Histidine--tRNA ligase (429 aa).

Belongs to the class-II aminoacyl-tRNA synthetase family. As to quaternary structure, homodimer.

The protein resides in the cytoplasm. The enzyme catalyses tRNA(His) + L-histidine + ATP = L-histidyl-tRNA(His) + AMP + diphosphate + H(+). The sequence is that of Histidine--tRNA ligase from Chlorobium phaeobacteroides (strain DSM 266 / SMG 266 / 2430).